The chain runs to 119 residues: Large ribosomal subunit protein uL24 (119 aa).

Belongs to the universal ribosomal protein uL24 family. As to quaternary structure, part of the 50S ribosomal subunit.

Functionally, one of two assembly initiator proteins, it binds directly to the 5'-end of the 23S rRNA, where it nucleates assembly of the 50S subunit. In terms of biological role, one of the proteins that surrounds the polypeptide exit tunnel on the outside of the subunit. This Paenarthrobacter aurescens (strain TC1) protein is Large ribosomal subunit protein uL24.